Here is a 226-residue protein sequence, read N- to C-terminus: 7-cyano-7-deazaguanine synthase (226 aa).

9 to 19 (LSGGLDSTVAT) is an ATP binding site. Residues Cys192, Cys200, Cys203, and Cys206 each contribute to the Zn(2+) site.

It belongs to the QueC family. It depends on Zn(2+) as a cofactor.

The enzyme catalyses 7-carboxy-7-deazaguanine + NH4(+) + ATP = 7-cyano-7-deazaguanine + ADP + phosphate + H2O + H(+). Its pathway is purine metabolism; 7-cyano-7-deazaguanine biosynthesis. Its function is as follows. Catalyzes the ATP-dependent conversion of 7-carboxy-7-deazaguanine (CDG) to 7-cyano-7-deazaguanine (preQ(0)). This Methanosphaera stadtmanae (strain ATCC 43021 / DSM 3091 / JCM 11832 / MCB-3) protein is 7-cyano-7-deazaguanine synthase.